A 326-amino-acid polypeptide reads, in one-letter code: DnaJ homolog subfamily B member 6 (326 aa).

The J domain occupies 2-69; that stretch reads VDYYEVLGVQ…KKRDIYDKYG (68 aa). Positions 2–146 are interaction with HSP70; it reads VDYYEVLGVQ…TGSFFSAFSG (145 aa). Positions 119 to 242 are interaction with KRT18; the sequence is FEDFFGNRRG…ADDDALAEER (124 aa). Residue R135 is modified to Omega-N-methylarginine. Positions 249–326 are disordered; that stretch reads ALPAQPAGLR…KKKKSTKGNH (78 aa). The residue at position 277 (S277) is a Phosphoserine.

Homooligomer. Interacts with BAG3, HSPB8 and STUB1. Interacts with ALKBH1. Interacts with HSP70, KRT18 and PTTG.

It localises to the cytoplasm. Its subcellular location is the perinuclear region. The protein localises to the nucleus. It is found in the myofibril. The protein resides in the sarcomere. It localises to the z line. Functionally, has a stimulatory effect on the ATPase activity of HSP70 in a dose-dependent and time-dependent manner and hence acts as a co-chaperone of HSP70. Plays an indispensable role in the organization of KRT8/KRT18 filaments. Acts as an endogenous molecular chaperone for neuronal proteins including huntingtin. Suppresses aggregation and toxicity of polyglutamine-containing, aggregation-prone proteins. Also reduces cellular toxicity and caspase-3 activity. This Pongo abelii (Sumatran orangutan) protein is DnaJ homolog subfamily B member 6 (DNAJB6).